Consider the following 507-residue polypeptide: ATP synthase subunit alpha (507 aa).

Gly168–Thr175 contributes to the ATP binding site.

It belongs to the ATPase alpha/beta chains family. As to quaternary structure, F-type ATPases have 2 components, CF(1) - the catalytic core - and CF(0) - the membrane proton channel. CF(1) has five subunits: alpha(3), beta(3), gamma(1), delta(1), epsilon(1). CF(0) has three main subunits: a(1), b(2) and c(9-12). The alpha and beta chains form an alternating ring which encloses part of the gamma chain. CF(1) is attached to CF(0) by a central stalk formed by the gamma and epsilon chains, while a peripheral stalk is formed by the delta and b chains.

Its subcellular location is the cell membrane. The catalysed reaction is ATP + H2O + 4 H(+)(in) = ADP + phosphate + 5 H(+)(out). Its function is as follows. Produces ATP from ADP in the presence of a proton gradient across the membrane. The alpha chain is a regulatory subunit. This chain is ATP synthase subunit alpha, found in Mesomycoplasma hyopneumoniae (strain J / ATCC 25934 / NCTC 10110) (Mycoplasma hyopneumoniae).